The sequence spans 310 residues: GMP synthase [glutamine-hydrolyzing] subunit B (310 aa).

The GMPS ATP-PPase domain maps to 2-185; that stretch reads FKTEPFIEES…LGLPDQIAHR (184 aa). 29 to 35 is an ATP binding site; the sequence is SGGVDSS.

Heterodimer composed of a glutamine amidotransferase subunit (A) and a GMP-binding subunit (B).

The enzyme catalyses XMP + L-glutamine + ATP + H2O = GMP + L-glutamate + AMP + diphosphate + 2 H(+). It participates in purine metabolism; GMP biosynthesis; GMP from XMP (L-Gln route): step 1/1. Catalyzes the synthesis of GMP from XMP. This is GMP synthase [glutamine-hydrolyzing] subunit B from Methanococcus maripaludis (strain C7 / ATCC BAA-1331).